Reading from the N-terminus, the 292-residue chain is UPF0749 protein Mb1856 (292 aa).

An N-terminal signal peptide occupies residues M1–A28. Positions M1–D30 are disordered. 3 helical membrane passes run V68–V88, A152–I172, and V229–M249.

Belongs to the UPF0749 family.

The protein resides in the cell membrane. This is UPF0749 protein Mb1856 from Mycobacterium bovis (strain ATCC BAA-935 / AF2122/97).